The following is a 324-amino-acid chain: Ribosomal RNA small subunit methyltransferase H (324 aa).

S-adenosyl-L-methionine-binding positions include 41–43, aspartate 60, tyrosine 87, aspartate 111, and glutamine 118; that span reads GGH.

The protein belongs to the methyltransferase superfamily. RsmH family.

The protein resides in the cytoplasm. The catalysed reaction is cytidine(1402) in 16S rRNA + S-adenosyl-L-methionine = N(4)-methylcytidine(1402) in 16S rRNA + S-adenosyl-L-homocysteine + H(+). Its function is as follows. Specifically methylates the N4 position of cytidine in position 1402 (C1402) of 16S rRNA. The chain is Ribosomal RNA small subunit methyltransferase H from Nocardia farcinica (strain IFM 10152).